The sequence spans 106 residues: ATPase inhibitor, mitochondrial (106 aa).

The N-terminal 25 residues, 1–25 (MAGSALAVRARFGVWGMKVLQTRGF), are a transit peptide targeting the mitochondrion. The interval 26-52 (VSDSSDSMDTGAGSIREAGGAFGKREK) is N-terminal inhibitory region. Residues 26 to 58 (VSDSSDSMDTGAGSIREAGGAFGKREKAEEDRY) are disordered. At S39 the chain carries Phosphoserine. Positions 48–58 (GKREKAEEDRY) are enriched in basic and acidic residues. Positions 60 to 106 (REKTKEQLAALRKHHEDEIDHHSKEIERLQKQIERHKKKIQQLKNNH) form a coiled coil. Positions 74-106 (HEDEIDHHSKEIERLQKQIERHKKKIQQLKNNH) are antiparallel alpha-helical coiled coil region. At K103 the chain carries N6-succinyllysine.

Belongs to the ATPase inhibitor family. As to quaternary structure, homodimer; represents the active form and is present at a pH value below 6.5. Homotetramer; represents the inactive form and is present at a pH value above 7.0.

Its subcellular location is the mitochondrion. In terms of biological role, endogenous F(1)F(o)-ATPase inhibitor limiting ATP depletion when the mitochondrial membrane potential falls below a threshold and the F(1)F(o)-ATP synthase starts hydrolyzing ATP to pump protons out of the mitochondrial matrix. Required to avoid the consumption of cellular ATP when the F(1)F(o)-ATP synthase enzyme acts as an ATP hydrolase. Indirectly acts as a regulator of heme synthesis in erythroid tissues: regulates heme synthesis by modulating the mitochondrial pH and redox potential, allowing FECH to efficiently catalyze the incorporation of iron into protoporphyrin IX to produce heme. In Mus musculus (Mouse), this protein is ATPase inhibitor, mitochondrial.